Consider the following 87-residue polypeptide: Cytochrome c oxidase subunit 6B1 (87 aa).

Positions 28-74 (TRNCWQNYLDFHRCQKAMTTKGGNVSVCEWYQRVYQSLCPTSWVTDW) constitute a CHCH domain. The short motif at 31 to 41 (CWQNYLDFHRC) is the Cx9C motif element. 2 disulfide bridges follow: Cys31/Cys66 and Cys41/Cys55. The Cx10C motif motif lies at 55–66 (CEWYQRVYQSLC).

Its subcellular location is the mitochondrion intermembrane space. In terms of biological role, connects the two COX monomers into the physiological dimeric form. In Macaca fascicularis (Crab-eating macaque), this protein is Cytochrome c oxidase subunit 6B1 (COX6B1).